The sequence spans 288 residues: Pantothenate synthetase (288 aa).

30-37 serves as a coordination point for ATP; the sequence is MGNLHNGH. The active-site Proton donor is His-37. Residue Gln-61 coordinates (R)-pantoate. Gln-61 is a binding site for beta-alanine. 149–152 serves as a coordination point for ATP; sequence GQKD. Gln-155 is a (R)-pantoate binding site. ATP-binding positions include Val-178 and 186–189; that span reads LSSR.

This sequence belongs to the pantothenate synthetase family. Homodimer.

It is found in the cytoplasm. It catalyses the reaction (R)-pantoate + beta-alanine + ATP = (R)-pantothenate + AMP + diphosphate + H(+). It functions in the pathway cofactor biosynthesis; (R)-pantothenate biosynthesis; (R)-pantothenate from (R)-pantoate and beta-alanine: step 1/1. Functionally, catalyzes the condensation of pantoate with beta-alanine in an ATP-dependent reaction via a pantoyl-adenylate intermediate. In Tolumonas auensis (strain DSM 9187 / NBRC 110442 / TA 4), this protein is Pantothenate synthetase.